We begin with the raw amino-acid sequence, 235 residues long: Glycerol-3-phosphate acyltransferase (235 aa).

6 helical membrane-spanning segments follow: residues 4-24, 56-76, 94-114, 122-142, 152-172, and 191-211; these read LIAILAISYLVGAIPTGIMAG, AVTLLDILKGIVAAVSIVAFF, LLAGMSAVIGHVFTVFAGFKG, AGMLIGIAPVSMLIVIGIFLL, VASILAAIAFPLIIAIRKYIF, and FHDSLDYHLMIFGLIVALAIL.

Belongs to the PlsY family. As to quaternary structure, probably interacts with PlsX.

The protein resides in the cell inner membrane. The catalysed reaction is an acyl phosphate + sn-glycerol 3-phosphate = a 1-acyl-sn-glycero-3-phosphate + phosphate. Its pathway is lipid metabolism; phospholipid metabolism. Functionally, catalyzes the transfer of an acyl group from acyl-phosphate (acyl-PO(4)) to glycerol-3-phosphate (G3P) to form lysophosphatidic acid (LPA). This enzyme utilizes acyl-phosphate as fatty acyl donor, but not acyl-CoA or acyl-ACP. The protein is Glycerol-3-phosphate acyltransferase of Chlorobium phaeobacteroides (strain DSM 266 / SMG 266 / 2430).